The sequence spans 265 residues: Phosphate import ATP-binding protein PstB (265 aa).

In terms of domain architecture, ABC transporter spans 18–260 (IAAKGVNVYY…PEDPRTESYI (243 aa)). 50 to 57 (GPSGCGKS) is a binding site for ATP.

Belongs to the ABC transporter superfamily. Phosphate importer (TC 3.A.1.7) family. The complex is composed of two ATP-binding proteins (PstB), two transmembrane proteins (PstC and PstA) and a solute-binding protein (PstS).

It is found in the cell inner membrane. It carries out the reaction phosphate(out) + ATP + H2O = ADP + 2 phosphate(in) + H(+). Part of the ABC transporter complex PstSACB involved in phosphate import. Responsible for energy coupling to the transport system. In Ruegeria sp. (strain TM1040) (Silicibacter sp.), this protein is Phosphate import ATP-binding protein PstB.